Here is a 754-residue protein sequence, read N- to C-terminus: MTAQTMTLGYARMGKRRELKKALEGFWSGALGSEALLATFWDLETQAWQTQLQAGIDHIAVGDQTLYDHVLDWATWLGLIPSRFRGLSGLDRYFAMARGREGLPALEMTKWFDTNYHYLVPEIEPEADPSPNFGDFLERVRRAQGILGERTSPVVLSPVTLLCLSQRSGDLRADLEKLLPLYRDLLQELKQLGIPEVQIHDPILVTSQGSGLREAVEMSYRQLATAGIPVHLVTYFDDLGETYPWVVQLPVAGISLDFTRGHTLDLVRTYGFPADQILGAGVVDARNVWKVQPETVLASLRELQGVAPNLRVQPSASLQFVPHDAALEAQLPEPLRNVLSFAEQKLAEVALLARALNGEDTAAQQAEIQQQWQSFAQFSPPNPQVRQALANLKLQDFERFLPYEQRLSRQVQLPPLPTTTIGSFPQTPEVRQWRAKYKRGEVSQAEYEAAIDAEIAKCIRIQEEIGLDVLVHGEFERTDMVEYFAQKLEGFAFTEHGWVQSYGSRCVRPPILYGDVVRPQPMTVREFQVAQSHTQKPVKGMLTGPVTMLNWSFPRVDIPRREQALQIALALRAEVADLEAAGAVMVQVDEPALREGLPLKKERWPEYLSWAVDAFRLATGGAKPETQIHTHMCYSEFGDIIEHIERLDADVLSIENSRSNNKTLLQIAQAGYRHQVGNGVYDVHSPAVPSVEQILQQLRTGLAHLPVEQTWVNPDCGLKTRRWEEVIPALKNMVAAAHQLGEELLETQPEGLRE.

5-methyltetrahydropteroyltri-L-glutamate-binding positions include 17–20 (RELK) and Lys110. Residues 421–423 (IGS) and Glu474 contribute to the L-homocysteine site. Residues 421 to 423 (IGS) and Glu474 each bind L-methionine. Residues 505-506 (RC) and Trp551 contribute to the 5-methyltetrahydropteroyltri-L-glutamate site. Asp589 contacts L-homocysteine. Asp589 is an L-methionine binding site. Glu595 contributes to the 5-methyltetrahydropteroyltri-L-glutamate binding site. Zn(2+)-binding residues include His631, Cys633, and Glu655. His684 functions as the Proton donor in the catalytic mechanism. Cys716 serves as a coordination point for Zn(2+).

This sequence belongs to the vitamin-B12 independent methionine synthase family. Zn(2+) is required as a cofactor.

The enzyme catalyses 5-methyltetrahydropteroyltri-L-glutamate + L-homocysteine = tetrahydropteroyltri-L-glutamate + L-methionine. Its pathway is amino-acid biosynthesis; L-methionine biosynthesis via de novo pathway; L-methionine from L-homocysteine (MetE route): step 1/1. Functionally, catalyzes the transfer of a methyl group from 5-methyltetrahydrofolate to homocysteine resulting in methionine formation. The protein is 5-methyltetrahydropteroyltriglutamate--homocysteine methyltransferase of Synechococcus sp. (strain JA-2-3B'a(2-13)) (Cyanobacteria bacterium Yellowstone B-Prime).